A 602-amino-acid polypeptide reads, in one-letter code: Aspartate--tRNA(Asp/Asn) ligase (602 aa).

Residue E176 coordinates L-aspartate. The aspartate stretch occupies residues 200-203 (QQFK). Residues R222 and H452 each coordinate L-aspartate. Position 222–224 (222–224 (RDE)) interacts with ATP. E490 lines the ATP pocket. R497 lines the L-aspartate pocket. Residue 542–545 (GIDR) participates in ATP binding.

This sequence belongs to the class-II aminoacyl-tRNA synthetase family. Type 1 subfamily. Homodimer.

The protein localises to the cytoplasm. It carries out the reaction tRNA(Asx) + L-aspartate + ATP = L-aspartyl-tRNA(Asx) + AMP + diphosphate. In terms of biological role, aspartyl-tRNA synthetase with relaxed tRNA specificity since it is able to aspartylate not only its cognate tRNA(Asp) but also tRNA(Asn). Reaction proceeds in two steps: L-aspartate is first activated by ATP to form Asp-AMP and then transferred to the acceptor end of tRNA(Asp/Asn). In Rickettsia bellii (strain OSU 85-389), this protein is Aspartate--tRNA(Asp/Asn) ligase.